Reading from the N-terminus, the 264-residue chain is MSKVTSSTLIKFKQEGKKFTALTAYDASFAGAFDSEGVDVLLVGDSLGMVLQGHNDTLPVTIADIAYHTACVKRGVARALLIADMPFMSYSTPEQTMNNAAILMQAGASMVKLEGGHWLLESVKMLTERGIPVCAHLGLTPQSVNVFGGFKVQGRDADNAQRILDEAKALQAAGAQLLVVECIPAPLAKAITEALTIPVIGIGAGADTDGQILVMHDVLGISSGYIPRFSKNYLKQTGEIRSAIRAYIDEVANGTFPAEEHTFN.

Mg(2+) is bound by residues Asp45 and Asp84. Residues 45–46 (DS), Asp84, and Lys112 each bind 3-methyl-2-oxobutanoate. Glu114 is a binding site for Mg(2+). Glu181 functions as the Proton acceptor in the catalytic mechanism.

It belongs to the PanB family. As to quaternary structure, homodecamer; pentamer of dimers. The cofactor is Mg(2+).

The protein resides in the cytoplasm. The enzyme catalyses 3-methyl-2-oxobutanoate + (6R)-5,10-methylene-5,6,7,8-tetrahydrofolate + H2O = 2-dehydropantoate + (6S)-5,6,7,8-tetrahydrofolate. It participates in cofactor biosynthesis; (R)-pantothenate biosynthesis; (R)-pantoate from 3-methyl-2-oxobutanoate: step 1/2. Catalyzes the reversible reaction in which hydroxymethyl group from 5,10-methylenetetrahydrofolate is transferred onto alpha-ketoisovalerate to form ketopantoate. This Shewanella frigidimarina (strain NCIMB 400) protein is 3-methyl-2-oxobutanoate hydroxymethyltransferase.